Here is a 94-residue protein sequence, read N- to C-terminus: Small ribosomal subunit protein uS19 (94 aa).

It belongs to the universal ribosomal protein uS19 family.

Functionally, protein S19 forms a complex with S13 that binds strongly to the 16S ribosomal RNA. This is Small ribosomal subunit protein uS19 (rpsS) from Lactobacillus acidophilus (strain ATCC 700396 / NCK56 / N2 / NCFM).